A 1818-amino-acid chain; its full sequence is MSSTKSQVALATNIPTNLSSAASASTAAAAAAVVVVASANAAVASSANSSGVGSGSGPGPGSGAGVSGPVAAGTATAVATGSTVTAATSVAATTSTSVATISTSCSSSSINNINNNCGEECQSAAGSSNLGRQNSFGNRRGNMKGKHLTRSHAMRESTSPPRTPTPRAASEQQQQQLQGEQHEHNNNNNINSSSKAQSAGRGNSPLMETPAVIVTSQQPQQQQQQQQQQQQSVPPKPQQNVPLSNEAEFPKLSPPKKSGGQHNRTNSNGSGMEFNNNNNSSNKKFVVDMKANGLDNKPHNNSSTGVIFNSGMNYKAAERHDRHERHEMSSQNSNLSNNHDEEPYHYEPRGGGGGKKHRANTNAKGNKPRLKNLGGSSSGSIDLGGGGGNGNCNNMSNNGQSNNSSNNTSGFISRENSSEQYTDYGGTDLLVFFRDTLNKNPKDRNILLKIEKDLIDFVQENSRGCEYRFPPASSYNRMLIHRTAAFFGMEHNVDTETQQCVIVAVAKNTRIPEIRFQSLVRDDARKSILKRDTHSFDEVRQSPYLCPLSLDRKAKSFEEREEDYDRARSRIFSRTGGNHDGYSGGGGDEECYGGWEQQQQQQKQSQPPRPKRPNGKMLQMQNSTESRDGMRSGGAVPKSHNFGNYGGPPSSGGPGNNSLPRGDSTNSIKSGRGGFVKQDSTGSTPWRLSPSSSGSIYHYDPSNLPPNQALQHSGNQYQSQNQGNSSSGGYNNYRKSSPHQQQQSQQQQQSQQHHQQQLQQPQQLHQQSSQQYATTELSCSSTESYAEEEAQSPGMECSEGYESYEQQSLPVQQQLSGNGDSASTKGDDCDSLASATACLSITTSTSTKNYDRIEVQKYKNQATSPNIPACCAVGEKLELEAGLPQEQEQEPMAGPSSSGSATSSVGITELPSSQTPLPMVNQVNCDLQSVSPSTTPYSQCEVKTPSQNHAPSAAVEEPKTTTWTYTQSYQAPDGSTVFHTTTTPNGAAPYCATTYQQGPDGSIYAVPQGMVYAAYPQPGVGTAGGASQPLFQLTTSSHPPAQTIFASPEAGAEIPGGTYMIPVFDPAQQPREGLIPAQAIYQTGPGGPGATTVMPMATAAAYPTAQFATAAPNGAPIYQAPLIYSSEPGGGAQLQQLPMAPYPIQYSYPYYHPISYYVPQQAVAAAPMVASQPQVGQAPMQQQAPHTGAGTTTGPPTVVSVSGQQHHQPHQQHHQQQQHSSNGSVVTSSAYGTRVKRTPGGGSIHYNPSYTPSSVAHAGGAHHPSAGSAQIIAAPAASTTTYHALPTLTLAHGGPATGTDLSGAGGAHVYALPAQHALIPTNIFPYAAAAAAAAGGPGGPPTTPQVVQQAPPPPPQSAPHHALITAAPFYPANGGNMDQGASQSAPSTPAAPGRQAPLFSTPPAPNNGSSGSSSAGGGGNSGGYHSNSSTPHYYQGQNSNEGYTSPYEKRNHGGGASGAHSVGVRKPYHPGGYNPRHSVPLGGIPSGAKTPLLNSNNEPTPRASPSSVSLGGASSSGGANSYPHRGPPPHTMGVKRDNKPNQLPLISGPPPSYAANSSPGVSSYESKPPVRLNAGAASFRSQKSMNQDYRRSVSQRNSPSANGGGSGSHESSNNSPNSIVGSQSNSAANTPNAAAPPPPQPQPTLVSHSGGFVVLDQTTGAAMNASPPSLYGGGGGPNAGISGGAGASGAAGSNGGHQPGGGGGARSHIPTAQLHHSAAAAAAAAAGSQQATAAVLSGVAAAAALGGYNPNGASGVYFKYGQTYFAHPSVALPNSRRSPSNDIRPQMAQVAGMYPTMMIQARHPSRHPNPNYKGSRPR.

Disordered regions lie at residues 47–68, 123–282, and 317–413; these read ANSS…GVSG, SAAG…NSSN, and AERH…GFIS. Over residues 52 to 66 the composition is skewed to gly residues; it reads VGSGSGPGPGSGAGV. Over residues 124–137 the composition is skewed to polar residues; that stretch reads AAGSSNLGRQNSFG. Basic residues predominate over residues 141 to 152; sequence GNMKGKHLTRSH. Low complexity-rich tracts occupy residues 156-179, 186-199, 217-233, and 266-282; these read ESTS…QLQG, NNNN…AQSA, QQPQ…QQSV, and NSNG…NSSN. 2 positions are modified to phosphoserine: Ser-267 and Ser-270. The span at 317 to 328 shows a compositional bias: basic and acidic residues; that stretch reads AERHDRHERHEM. Residue Ser-336 is modified to Phosphoserine. The segment covering 338–348 has biased composition (basic and acidic residues); sequence NHDEEPYHYEP. 2 stretches are compositionally biased toward low complexity: residues 372–381 and 391–410; these read NLGGSSSGSI and NCNN…NTSG. Residues 444–508 enclose the R3H domain; it reads RNILLKIEKD…QCVIVAVAKN (65 aa). Residues 510-576 form the SUZ domain; it reads RIPEIRFQSL…ARSRIFSRTG (67 aa). Position 535 is a phosphoserine (Ser-535). Basic and acidic residues predominate over residues 557–568; that stretch reads FEEREEDYDRAR. 6 disordered regions span residues 557-806, 885-916, 936-959, 1176-1249, 1332-1648, and 1684-1709; these read FEER…SYEQ, QEQE…SQTP, PYSQ…EEPK, GQAP…YNPS, AAAG…LVSH, and GAGA…RSHI. Over residues 592-606 the composition is skewed to low complexity; that stretch reads YGGWEQQQQQQKQSQ. The segment covering 644–655 has biased composition (gly residues); the sequence is NYGGPPSSGGPG. Positions 678–695 are enriched in polar residues; it reads QDSTGSTPWRLSPSSSGS. Residues 713–771 show a composition bias toward low complexity; it reads SGNQYQSQNQGNSSSGGYNNYRKSSPHQQQQSQQQQQSQQHHQQQLQQPQQLHQQSSQQ. Residues 772-784 show a composition bias toward polar residues; that stretch reads YATTELSCSSTES. A compositionally biased stretch (low complexity) spans 893–904; it reads AGPSSSGSATSS. Residues 1176-1197 are compositionally biased toward low complexity; it reads GQAPMQQQAPHTGAGTTTGPPT. Over residues 1220–1231 the composition is skewed to polar residues; it reads SSNGSVVTSSAY. Over residues 1381-1392 the composition is skewed to low complexity; it reads ASQSAPSTPAAP. Polar residues predominate over residues 1430-1443; that stretch reads TPHYYQGQNSNEGY. Residues 1503–1521 are compositionally biased toward low complexity; the sequence is ASPSSVSLGGASSSGGANS. 2 stretches are compositionally biased toward polar residues: residues 1554 to 1565 and 1579 to 1596; these read AANSSPGVSSYE and FRSQ…VSQR. Positions 1608–1633 are enriched in low complexity; the sequence is SHESSNNSPNSIVGSQSNSAANTPNA. The span at 1684–1705 shows a compositional bias: gly residues; that stretch reads GAGASGAAGSNGGHQPGGGGGA.

Interacts with hfp; however, given the nuclear localization of hfp, the relevance of such interaction is unclear. Interacts with CycE, Cul1, and the SCF-proteasome complex. In terms of tissue distribution, expressed in all germline cells of the germarium including the stem cells and dividing cystocytes.

It localises to the cytoplasm. In terms of biological role, required for the regulation of germline mitosis, karyosome formation, and establishment of dorsoventral (DS) polarity of the egg and embryo. Involved in proper grk mRNA localization and translation in the oocyte. May control germline mitosis by facilitating the cyclin E (CycE) proteolysis by the SCF-ubiquitin-proteasome complex. The sequence is that of Protein encore (enc) from Drosophila melanogaster (Fruit fly).